Reading from the N-terminus, the 525-residue chain is Signal recognition particle protein (525 aa).

Residues 107-114 (GLQGSGKT), 196-200 (DTAGR), and 254-257 (TKLD) each bind GTP. The disordered stretch occupies residues 437–525 (GMGIPGIGRK…LSKLKFPGKK (89 aa)). Residues 447 to 467 (SATRKSKGAKGKSGKKSKKGT) are compositionally biased toward basic residues. Residues 480-497 (GVPGMPGLAGLPGGLPDL) are compositionally biased toward low complexity.

It belongs to the GTP-binding SRP family. SRP54 subfamily. Part of the signal recognition particle protein translocation system, which is composed of SRP and FtsY.

It is found in the cytoplasm. It catalyses the reaction GTP + H2O = GDP + phosphate + H(+). Functionally, involved in targeting and insertion of nascent membrane proteins into the cytoplasmic membrane. Binds to the hydrophobic signal sequence of the ribosome-nascent chain (RNC) as it emerges from the ribosomes. The SRP-RNC complex is then targeted to the cytoplasmic membrane where it interacts with the SRP receptor FtsY. This is Signal recognition particle protein from Mycobacterium bovis (strain ATCC BAA-935 / AF2122/97).